A 189-amino-acid chain; its full sequence is Adenylate kinase (189 aa).

Residue 11–16 participates in ATP binding; sequence GSGKGT. An NMP region spans residues 31–60; sequence STGDVLRAEIKNGTELGKTAKGYIDQGQLI. AMP is bound by residues Thr-32, Arg-37, 58–60, 86–89, and Gln-93; these read QLI and GFPR. Residues 127 to 137 are LID; sequence KRGKDSGRADD. Residue Arg-128 coordinates ATP. AMP-binding residues include Arg-134 and Arg-145. Position 173 (Gly-173) interacts with ATP.

This sequence belongs to the adenylate kinase family. Monomer.

It is found in the cytoplasm. It catalyses the reaction AMP + ATP = 2 ADP. It participates in purine metabolism; AMP biosynthesis via salvage pathway; AMP from ADP: step 1/1. In terms of biological role, catalyzes the reversible transfer of the terminal phosphate group between ATP and AMP. Plays an important role in cellular energy homeostasis and in adenine nucleotide metabolism. This Bacteroides thetaiotaomicron (strain ATCC 29148 / DSM 2079 / JCM 5827 / CCUG 10774 / NCTC 10582 / VPI-5482 / E50) protein is Adenylate kinase.